Reading from the N-terminus, the 389-residue chain is 3-ketoacyl-CoA thiolase (389 aa).

Residue Cys91 is the Acyl-thioester intermediate of the active site. Active-site proton acceptor residues include His343 and Cys373.

Belongs to the thiolase-like superfamily. Thiolase family. As to quaternary structure, heterotetramer of two alpha chains (FadB) and two beta chains (FadA).

It is found in the cytoplasm. It carries out the reaction an acyl-CoA + acetyl-CoA = a 3-oxoacyl-CoA + CoA. It functions in the pathway lipid metabolism; fatty acid beta-oxidation. Functionally, catalyzes the final step of fatty acid oxidation in which acetyl-CoA is released and the CoA ester of a fatty acid two carbons shorter is formed. This chain is 3-ketoacyl-CoA thiolase, found in Citrobacter koseri (strain ATCC BAA-895 / CDC 4225-83 / SGSC4696).